A 379-amino-acid chain; its full sequence is Cobalt-precorrin-5B C(1)-methyltransferase (379 aa).

This sequence belongs to the CbiD family.

The enzyme catalyses Co-precorrin-5B + S-adenosyl-L-methionine = Co-precorrin-6A + S-adenosyl-L-homocysteine. It participates in cofactor biosynthesis; adenosylcobalamin biosynthesis; cob(II)yrinate a,c-diamide from sirohydrochlorin (anaerobic route): step 6/10. Functionally, catalyzes the methylation of C-1 in cobalt-precorrin-5B to form cobalt-precorrin-6A. This Citrobacter koseri (strain ATCC BAA-895 / CDC 4225-83 / SGSC4696) protein is Cobalt-precorrin-5B C(1)-methyltransferase.